The chain runs to 109 residues: Ribonuclease P protein component (109 aa).

Belongs to the RnpA family. As to quaternary structure, consists of a catalytic RNA component (M1 or rnpB) and a protein subunit.

The catalysed reaction is Endonucleolytic cleavage of RNA, removing 5'-extranucleotides from tRNA precursor.. RNaseP catalyzes the removal of the 5'-leader sequence from pre-tRNA to produce the mature 5'-terminus. It can also cleave other RNA substrates such as 4.5S RNA. The protein component plays an auxiliary but essential role in vivo by binding to the 5'-leader sequence and broadening the substrate specificity of the ribozyme. This is Ribonuclease P protein component from Streptococcus agalactiae serotype III (strain NEM316).